The primary structure comprises 399 residues: Phosphoglycerate kinase (399 aa).

Substrate is bound by residues 24–26 (DLN), R41, 64–67 (HLGR), R123, and R160. ATP-binding positions include K210, G298, E329, and 355-358 (GGDS).

The protein belongs to the phosphoglycerate kinase family. In terms of assembly, monomer.

The protein localises to the cytoplasm. The enzyme catalyses (2R)-3-phosphoglycerate + ATP = (2R)-3-phospho-glyceroyl phosphate + ADP. It functions in the pathway carbohydrate degradation; glycolysis; pyruvate from D-glyceraldehyde 3-phosphate: step 2/5. The polypeptide is Phosphoglycerate kinase (Salinispora tropica (strain ATCC BAA-916 / DSM 44818 / JCM 13857 / NBRC 105044 / CNB-440)).